The following is a 378-amino-acid chain: tRNA (guanine(26)-N(2))-dimethyltransferase (378 aa).

A Trm1 methyltransferase domain is found at 4-374 (KEVTEGKVRI…KGYEEIIRCV (371 aa)). Positions 44, 69, 87, 114, and 115 each coordinate S-adenosyl-L-methionine. 4 residues coordinate Zn(2+): Cys-246, Cys-249, Cys-263, and Cys-266.

It belongs to the class I-like SAM-binding methyltransferase superfamily. Trm1 family.

The enzyme catalyses guanosine(26) in tRNA + 2 S-adenosyl-L-methionine = N(2)-dimethylguanosine(26) in tRNA + 2 S-adenosyl-L-homocysteine + 2 H(+). Its function is as follows. Dimethylates a single guanine residue at position 26 of a number of tRNAs using S-adenosyl-L-methionine as donor of the methyl groups. This Saccharolobus islandicus (strain Y.G.57.14 / Yellowstone #1) (Sulfolobus islandicus) protein is tRNA (guanine(26)-N(2))-dimethyltransferase.